Here is a 394-residue protein sequence, read N- to C-terminus: L-lactate dehydrogenase (394 aa).

Residues 1–380 (MIISAASDYR…SRDSLVQNAE (380 aa)) form the FMN hydroxy acid dehydrogenase domain. Tyr-24 contributes to the substrate binding site. FMN contacts are provided by Ser-106 and Gln-127. Residue Tyr-129 coordinates substrate. Thr-155 contributes to the FMN binding site. Arg-164 serves as a coordination point for substrate. An FMN-binding site is contributed by Lys-251. His-275 acts as the Proton acceptor in catalysis. Arg-278 contacts substrate. Residue 306-330 (DSGIRNGLDVVRMIALGADSVLLGR) coordinates FMN.

Belongs to the FMN-dependent alpha-hydroxy acid dehydrogenase family. Requires FMN as cofactor.

The protein localises to the cell inner membrane. It carries out the reaction (S)-lactate + A = pyruvate + AH2. Its function is as follows. Catalyzes the conversion of L-lactate to pyruvate. Is coupled to the respiratory chain. This is L-lactate dehydrogenase from Klebsiella pneumoniae subsp. pneumoniae (strain ATCC 700721 / MGH 78578).